Here is a 3329-residue protein sequence, read N- to C-terminus: Breast cancer type 2 susceptibility protein homolog (3329 aa).

The interaction with PALB2 stretch occupies residues methionine 1 to proline 40. Disordered regions lie at residues serine 37 to proline 69 and glutamate 207 to serine 241. 2 positions are modified to phosphoserine: serine 435 and serine 481. The disordered stretch occupies residues proline 628 to phenylalanine 650. The tract at residues proline 628 to valine 979 is interaction with NPM1. At serine 735 the chain carries Phosphoserine. Residues glutamate 934–lysine 953 are compositionally biased toward basic and acidic residues. The interval glutamate 934 to asparagine 965 is disordered. Polar residues predominate over residues serine 954–asparagine 965. BRCA2 repeat units lie at residues asparagine 981 to glutamate 1015 and asparagine 1192 to asparagine 1226. The interval histidine 982 to glutamate 2035 is interaction with RAD51. The segment at asparagine 1296–serine 1340 is disordered. The segment covering tyrosine 1303–glycine 1323 has biased composition (polar residues). BRCA2 repeat units lie at residues isoleucine 1394–aspartate 1428, lysine 1491–tyrosine 1525, threonine 1623–aspartate 1657, proline 1924–glycine 1958, and asparagine 2004–leucine 2038. Residue serine 2048 is modified to Phosphoserine. The segment at asparagine 2073–threonine 2099 is disordered. Positions serine 2074–threonine 2099 are enriched in polar residues. Residues lysine 2219 to serine 2285 form an interaction with HSF2BP region. The segment at threonine 2298–valine 2466 is interaction with FANCD2. Positions phenylalanine 2361–histidine 2393 are disordered. Over residues lysine 2377–histidine 2393 the composition is skewed to basic and acidic residues. The interaction with SEM1 stretch occupies residues methionine 2402–glutamate 2753. A Nuclear export signal; masked by interaction with SEM1 motif is present at residues alanine 2603–threonine 2619. Serine 3214 bears the Phosphoserine; by CDK1 and CDK2 mark. Disordered regions lie at residues phenylalanine 3221–proline 3257 and glutamine 3273–serine 3329. Serine 3241 carries the phosphoserine modification. Residues serine 3309–serine 3329 show a composition bias toward basic and acidic residues.

In terms of assembly, monomer and dimer. Interacts with RAD51; regulates RAD51 recruitment and function at sites of DNA repair. Interacts with SEM1, WDR16, USP11, DMC1, ROCK2 and NPM1. Interacts with both nonubiquitinated and monoubiquitinated FANCD2; this complex also includes XRCC3 and phosphorylated FANCG. Part of a BRCA complex containing BRCA1, BRCA2 and PALB2. Component of the homologous recombination repair (HR) complex composed of ERCC5/XPG, BRCA2, PALB2, DSS1 and RAD51. Within the complex, interacts with ERCC5/XPG and PALB2. Interacts directly with PALB2 which may serve as a scaffold for a HR complex containing PALB2, BRCA2, RAD51C, RAD51 and XRCC3. Interacts with BRCA1 only in the presence of PALB2 which serves as the bridging protein. Interacts with POLH; the interaction is direct. Interacts with the TREX-2 complex subunits PCID2 and SEM1. Interacts with HSF2BP and BRME1; the interaction with HSF2BP is direct and allows the formation of a ternary complex. The complex BRME1:HSF2BP:BRCA2 interacts with SPATA22, MEIOB and RAD51. Phosphorylated by ATM upon irradiation-induced DNA damage. Phosphorylation by CHEK1 and CHEK2 regulates interaction with RAD51. Phosphorylation at Ser-3291 by CDK1 and CDK2 is low in S phase when recombination is active, but increases as cells progress towards mitosis; this phosphorylation prevents homologous recombination-dependent repair during S phase and G2 by inhibiting RAD51 binding. In terms of processing, ubiquitinated in the absence of DNA damage; this does not lead to proteasomal degradation. In contrast, ubiquitination in response to DNA damage leads to proteasomal degradation. In terms of tissue distribution, widely expressed. Highest expression in cerebellum, testis, ileum, appendix, epididymis, ovary and mammary gland. No expression in lung.

It localises to the nucleus. The protein resides in the cytoplasm. Its subcellular location is the cytoskeleton. It is found in the microtubule organizing center. The protein localises to the centrosome. Functionally, involved in double-strand break repair and/or homologous recombination. Binds RAD51 and potentiates recombinational DNA repair by promoting assembly of RAD51 onto single-stranded DNA (ssDNA). Acts by targeting RAD51 to ssDNA over double-stranded DNA, enabling RAD51 to displace replication protein-A (RPA) from ssDNA and stabilizing RAD51-ssDNA filaments by blocking ATP hydrolysis. Part of a PALB2-scaffolded HR complex containing RAD51C and which is thought to play a role in DNA repair by HR. May participate in S phase checkpoint activation. Binds selectively to ssDNA, and to ssDNA in tailed duplexes and replication fork structures. May play a role in the extension step after strand invasion at replication-dependent DNA double-strand breaks; together with PALB2 is involved in both POLH localization at collapsed replication forks and DNA polymerization activity. In concert with NPM1, regulates centrosome duplication. Interacts with the TREX-2 complex (transcription and export complex 2) subunits PCID2 and SEM1, and is required to prevent R-loop-associated DNA damage and thus transcription-associated genomic instability, independently of its known role in homologous recombination. In Mus musculus (Mouse), this protein is Breast cancer type 2 susceptibility protein homolog.